The sequence spans 147 residues: Protein-export protein SecB (147 aa).

Belongs to the SecB family. As to quaternary structure, homotetramer, a dimer of dimers. One homotetramer interacts with 1 SecA dimer.

It is found in the cytoplasm. One of the proteins required for the normal export of preproteins out of the cell cytoplasm. It is a molecular chaperone that binds to a subset of precursor proteins, maintaining them in a translocation-competent state. It also specifically binds to its receptor SecA. This Neisseria meningitidis serogroup B (strain ATCC BAA-335 / MC58) protein is Protein-export protein SecB.